The sequence spans 322 residues: Peroxidase 66 (322 aa).

Positions 1-24 (MAFSKGLIFAMIFAVLAIVKPSEA) are cleaved as a signal peptide. Disulfide bonds link C35-C114 and C68-C73. H66 serves as the catalytic Proton acceptor. Residues D67, G72, D74, and S76 each contribute to the Ca(2+) site. N155 carries N-linked (GlcNAc...) asparagine glycosylation. Residue P161 coordinates substrate. N-linked (GlcNAc...) asparagine glycosylation occurs at N166. H191 serves as a coordination point for heme b. Residue T192 participates in Ca(2+) binding. A disulfide bond links C198 and C230. N207 is a glycosylation site (N-linked (GlcNAc...) asparagine). Positions 245, 247, and 252 each coordinate Ca(2+).

It belongs to the peroxidase family. Classical plant (class III) peroxidase subfamily. Heme b serves as cofactor. The cofactor is Ca(2+).

The protein resides in the secreted. It carries out the reaction 2 a phenolic donor + H2O2 = 2 a phenolic radical donor + 2 H2O. Functionally, removal of H(2)O(2), oxidation of toxic reductants, biosynthesis and degradation of lignin, suberization, auxin catabolism, response to environmental stresses such as wounding, pathogen attack and oxidative stress. These functions might be dependent on each isozyme/isoform in each plant tissue. This is Peroxidase 66 (PER66) from Arabidopsis thaliana (Mouse-ear cress).